Here is a 532-residue protein sequence, read N- to C-terminus: Putative sodium-dependent excitatory amino acid transporter glt-3 (532 aa).

The Cytoplasmic segment spans residues 1 to 5 (MGMKK). The next 3 helical transmembrane spans lie at 6 to 26 (DLLL…GFVI), 46 to 66 (FMQI…ISAL), and 83 to 103 (IYYM…VSSI). At 104-181 (HPGDPELIHE…SEVLHKQTLT (78 aa)) the chain is on the extracellular side. N-linked (GlcNAc...) asparagine glycans are attached at residues Asn164 and Asn169. 5 helical membrane passes run 182 to 202 (YTNE…GIIL), 222 to 242 (IIMR…LSLV), 264 to 284 (VTVI…LYFL), 352 to 372 (AVAV…MDLV), and 383 to 402 (IGSG…LTTV).

The protein belongs to the dicarboxylate/amino acid:cation symporter (DAACS) (TC 2.A.23) family.

It is found in the membrane. The sequence is that of Putative sodium-dependent excitatory amino acid transporter glt-3 (glt-3) from Caenorhabditis elegans.